The following is a 389-amino-acid chain: Protein DDI1 homolog 1 (389 aa).

The disordered stretch occupies residues 109–132 (SSSSAQSAQRTRRVEQDDEGEKSM). D261 is a catalytic residue.

Belongs to the DDI1 family. As to expression, expressed in most tissues.

The protein localises to the cytoplasm. It is found in the nucleus. Functionally, aspartic protease. Required for the cleavage and activation of transcription factors such as isoform a of the transcription factor skn-1, which in turn regulates the expression of proteasomal subunits such as rpt-3. Plays a key role in the degradation of the potassium channel slo-1, perhaps acting directly, in cleaving slo-1 upstream of the ER-associated degradation pathway (ERAD), and also indirectly, via activation of the transcription factor skn-1, which mediates proteasomal homeostasis. In Caenorhabditis elegans, this protein is Protein DDI1 homolog 1.